The chain runs to 197 residues: Lipoprotein signal peptidase (197 aa).

Helical transmembrane passes span 73 to 93 (SNAI…YLMI) and 97 to 117 (TIGS…NLID). Active-site residues include D126 and D144. The helical transmembrane segment at 135–155 (YSFPVFNLADCFITIGVIILI) threads the bilayer.

Belongs to the peptidase A8 family.

It is found in the cell inner membrane. It carries out the reaction Release of signal peptides from bacterial membrane prolipoproteins. Hydrolyzes -Xaa-Yaa-Zaa-|-(S,diacylglyceryl)Cys-, in which Xaa is hydrophobic (preferably Leu), and Yaa (Ala or Ser) and Zaa (Gly or Ala) have small, neutral side chains.. It participates in protein modification; lipoprotein biosynthesis (signal peptide cleavage). Functionally, this protein specifically catalyzes the removal of signal peptides from prolipoproteins. This chain is Lipoprotein signal peptidase, found in Rickettsia felis (strain ATCC VR-1525 / URRWXCal2) (Rickettsia azadi).